Consider the following 223-residue polypeptide: Adenylate kinase (223 aa).

Position 10–15 (10–15 (GAGKGT)) interacts with ATP. Residues 30–59 (STGDILRQAVKEGTEVGKIAGELMKAGKLI) form an NMP region. Residues threonine 31, arginine 36, 57-59 (KLI), 85-88 (GFPR), and glutamine 92 contribute to the AMP site. Residues 126–163 (GRYVCAQCGAGYHDEFKRPHKEGVCDICGSTEFKRRPD) form an LID region. Arginine 127 provides a ligand contact to ATP. Zn(2+)-binding residues include cysteine 130, cysteine 133, cysteine 150, and cysteine 153. Arginine 160 and arginine 172 together coordinate AMP. Leucine 200 is an ATP binding site.

Belongs to the adenylate kinase family. In terms of assembly, monomer.

The protein resides in the cytoplasm. It catalyses the reaction AMP + ATP = 2 ADP. Its pathway is purine metabolism; AMP biosynthesis via salvage pathway; AMP from ADP: step 1/1. Catalyzes the reversible transfer of the terminal phosphate group between ATP and AMP. Plays an important role in cellular energy homeostasis and in adenine nucleotide metabolism. In Zymomonas mobilis subsp. mobilis (strain ATCC 31821 / ZM4 / CP4), this protein is Adenylate kinase.